Consider the following 247-residue polypeptide: 2,3-bisphosphoglycerate-dependent phosphoglycerate mutase (247 aa).

Substrate is bound by residues 8–15, 21–22, arginine 60, 87–90, lysine 98, 114–115, and 183–184; these read RHGESVWN, TG, ERHY, RR, and GN. Histidine 9 functions as the Tele-phosphohistidine intermediate in the catalytic mechanism. The active-site Proton donor/acceptor is glutamate 87.

The protein belongs to the phosphoglycerate mutase family. BPG-dependent PGAM subfamily.

It catalyses the reaction (2R)-2-phosphoglycerate = (2R)-3-phosphoglycerate. It functions in the pathway carbohydrate degradation; glycolysis; pyruvate from D-glyceraldehyde 3-phosphate: step 3/5. Catalyzes the interconversion of 2-phosphoglycerate and 3-phosphoglycerate. In Thermobifida fusca (strain YX), this protein is 2,3-bisphosphoglycerate-dependent phosphoglycerate mutase.